A 122-amino-acid chain; its full sequence is Cytochrome c-556 (122 aa).

Heme-binding residues include Met-11, Cys-111, Cys-114, and His-115. Residues Met-11, Cys-111, Cys-114, and His-115 each coordinate heme c.

As to quaternary structure, monomer. Binds 1 heme c group covalently per subunit.

Its function is as follows. Low-spin monoheme cytochrome c. This Agrobacterium tumefaciens (strain B2A) protein is Cytochrome c-556.